The primary structure comprises 949 residues: Glycine dehydrogenase (decarboxylating) (949 aa).

Position 697 is an N6-(pyridoxal phosphate)lysine (lysine 697).

Belongs to the GcvP family. The glycine cleavage system is composed of four proteins: P, T, L and H. The cofactor is pyridoxal 5'-phosphate.

The catalysed reaction is N(6)-[(R)-lipoyl]-L-lysyl-[glycine-cleavage complex H protein] + glycine + H(+) = N(6)-[(R)-S(8)-aminomethyldihydrolipoyl]-L-lysyl-[glycine-cleavage complex H protein] + CO2. In terms of biological role, the glycine cleavage system catalyzes the degradation of glycine. The P protein binds the alpha-amino group of glycine through its pyridoxal phosphate cofactor; CO(2) is released and the remaining methylamine moiety is then transferred to the lipoamide cofactor of the H protein. This is Glycine dehydrogenase (decarboxylating) from Deinococcus radiodurans (strain ATCC 13939 / DSM 20539 / JCM 16871 / CCUG 27074 / LMG 4051 / NBRC 15346 / NCIMB 9279 / VKM B-1422 / R1).